A 650-amino-acid chain; its full sequence is Serine/threonine-protein phosphatase with EF-hands 1 (650 aa).

In terms of domain architecture, IQ spans 16–45; it reads VIKAALVIQNWYRRYRARLRVRQHYALAIF. The catalytic stretch occupies residues 124–456; sequence IHILLQAFKQ…PQFFQYQVTS (333 aa). Mn(2+)-binding residues include D175, H177, D204, and N236. Residue H237 is the Proton donor of the active site. H288 is a binding site for Mn(2+). Positions 315–348 are disordered; it reads PVLGNQETGEKRNKSASNYVEPRKVEPDKTPSED. Basic and acidic residues predominate over residues 335-348; it reads EPRKVEPDKTPSED. A Mn(2+)-binding site is contributed by H404. EF-hand domains are found at residues 484 to 519, 567 to 602, and 607 to 642; these read SRKTDLINAFELRDHSRSGRISLAEWAFSMENILGL, RYRSDLKIIFNIIDSDQSGLISMDEFRTMWKLFNAH, and IDDSQIDELASIVDFNKDGNIDFNEFLKAFYVVHKY. Positions 497, 499, 501, 503, 508, 580, 582, 584, 591, 620, 622, 624, 626, and 631 each coordinate Ca(2+).

Belongs to the PPP phosphatase family. Mn(2+) is required as a cofactor. It depends on Mg(2+) as a cofactor. In the embryo it is almost exclusively expressed in the peripheral nervous system, within sensory neurons of cranial and dorsal root ganglia. Otherwise found in fetal inner ear and a small group of neurons in the midbrain/pons junction.

It carries out the reaction O-phospho-L-seryl-[protein] + H2O = L-seryl-[protein] + phosphate. The catalysed reaction is O-phospho-L-threonyl-[protein] + H2O = L-threonyl-[protein] + phosphate. Activated by calcium. Functionally, may have a role in the recovery or adaptation response of photoreceptors. May have a role in diverse sensory neurons and in development. The protein is Serine/threonine-protein phosphatase with EF-hands 1 (Ppef1) of Mus musculus (Mouse).